We begin with the raw amino-acid sequence, 443 residues long: MKVMKWSAIALAVSAGSTQFAVADAFVSDQAEAKGFIEDSSLDLLLRNYYFNRDGKSGSGDRVDWTQGFLTTYESGFTQGTVGFGVDAFGYLGLKLDGTSDKTGTGNLPVMNDGKPRDDYSRAGGAVKVRISKTMLKWGEMQPTAPVFAAGGSRLFPQTATGFQLQSSEFEGLDLEAGHFTEGKEPTTVKSRGELYATYAGETAKSADFIGGRYAITDNLSASLYGAELEDIYRQYYLNSNYTIPLASDQSLGFDFNIYRTNDEGKAKAGDISNTTWSLAAAYTLDAHTFTLAYQKVHGDQPFDYIGFGRNGSGAGGDSIFLANSVQYSDFNGPGEKSWQARYDLNLASYGVPGLTFMVRYINGKDIDGTKMSDNNVGYKNYGYGEDGKHHETNLEAKYVVQSGPAKDLSFRIRQAWHRANADQGEGDQNEFRLIVDYPLSIL.

The first 23 residues, 1–23 (MKVMKWSAIALAVSAGSTQFAVA), serve as a signal peptide directing secretion. Active-site residues include H179, D231, and S319.

The protein belongs to the outer membrane porin (Opr) (TC 1.B.25) family.

The protein resides in the cell outer membrane. Porin with a specificity for basic amino acids. Involved in facilitated diffusion of carbapenem beta-lactam antibiotics, such as imipenem and meropenem. Also possesses serine protease activity. The protein is Porin D (oprD) of Pseudomonas aeruginosa (strain ATCC 15692 / DSM 22644 / CIP 104116 / JCM 14847 / LMG 12228 / 1C / PRS 101 / PAO1).